The primary structure comprises 348 residues: Endoglucanase-6B (348 aa).

Substrate-binding residues include tryptophan 52 and serine 54. Active-site proton donor residues include aspartate 92 and aspartate 139. Residues asparagine 183, tryptophan 186, asparagine 222, tryptophan 282, lysine 310, and glutamate 314 each coordinate substrate. A compositionally biased stretch (low complexity) spans 222 to 241 (NYNPYSTSNPPPYTSGSPSP). The disordered stretch occupies residues 222–244 (NYNPYSTSNPPPYTSGSPSPDES).

Belongs to the glycosyl hydrolase 6 (cellulase B) family. Monomer.

It catalyses the reaction Endohydrolysis of (1-&gt;4)-beta-D-glucosidic linkages in cellulose, lichenin and cereal beta-D-glucans.. Plays a central role in the recycling of plant biomass. The biological conversion of cellulose to glucose generally requires three types of hydrolytic enzymes: (1) Endoglucanases which cut internal beta-1,4-glucosidic bonds; (2) Exocellobiohydrolases that cut the disaccharide cellobiose from the non-reducing end of the cellulose polymer chain; (3) Beta-1,4-glucosidases which hydrolyze the cellobiose and other short cello-oligosaccharides to glucose. The protein is Endoglucanase-6B of Humicola insolens (Soft-rot fungus).